A 366-amino-acid polypeptide reads, in one-letter code: Chorismate synthase (366 aa).

An NADP(+)-binding site is contributed by Arg-48. Residues 125–127 (RSS), 241–242 (NA), Gly-285, 300–304 (KPTSS), and Arg-326 each bind FMN.

This sequence belongs to the chorismate synthase family. Homotetramer. The cofactor is FMNH2.

It carries out the reaction 5-O-(1-carboxyvinyl)-3-phosphoshikimate = chorismate + phosphate. Its pathway is metabolic intermediate biosynthesis; chorismate biosynthesis; chorismate from D-erythrose 4-phosphate and phosphoenolpyruvate: step 7/7. Its function is as follows. Catalyzes the anti-1,4-elimination of the C-3 phosphate and the C-6 proR hydrogen from 5-enolpyruvylshikimate-3-phosphate (EPSP) to yield chorismate, which is the branch point compound that serves as the starting substrate for the three terminal pathways of aromatic amino acid biosynthesis. This reaction introduces a second double bond into the aromatic ring system. This Ruegeria pomeroyi (strain ATCC 700808 / DSM 15171 / DSS-3) (Silicibacter pomeroyi) protein is Chorismate synthase.